We begin with the raw amino-acid sequence, 775 residues long: Subtilisin-like protease SBT1.2 (775 aa).

Residues Met-1–Ser-20 form the signal peptide. The Inhibitor I9 domain maps to Thr-27–Val-111. The Peptidase S8 domain maps to Ser-116 to Ile-618. Residues Asp-146 and His-222 each act as charge relay system in the active site. One can recognise a PA domain in the interval Gly-388–Tyr-470. Asn-472 and Asn-544 each carry an N-linked (GlcNAc...) asparagine glycan. The active-site Charge relay system is Ser-552. N-linked (GlcNAc...) asparagine glycosylation is present at Asn-652.

The protein belongs to the peptidase S8 family. As to expression, mostly expressed in leaves and cotyledons (especially in epidermal cells), and, to a lower extent, in floral buds, stems, and siliques. Strongly expressed in stomatal precursor cells (meristemoids and guard mother cells).

It is found in the secreted. It localises to the extracellular space. The protein resides in the apoplast. The protein localises to the cell membrane. In terms of biological role, serine protease involved in the negative regulation of stomatal density and distribution. Not active on EPFL6 (AC Q1PEY6). Positive regulator of water use efficiency (WUE). In Arabidopsis thaliana (Mouse-ear cress), this protein is Subtilisin-like protease SBT1.2.